Reading from the N-terminus, the 97-residue chain is Large ribosomal subunit protein uL23 (97 aa).

It belongs to the universal ribosomal protein uL23 family. As to quaternary structure, part of the 50S ribosomal subunit. Contacts protein L29, and trigger factor when it is bound to the ribosome.

Functionally, one of the early assembly proteins it binds 23S rRNA. One of the proteins that surrounds the polypeptide exit tunnel on the outside of the ribosome. Forms the main docking site for trigger factor binding to the ribosome. The sequence is that of Large ribosomal subunit protein uL23 from Marinobacter nauticus (strain ATCC 700491 / DSM 11845 / VT8) (Marinobacter aquaeolei).